We begin with the raw amino-acid sequence, 435 residues long: Xylose isomerase (435 aa).

Active-site residues include His-100 and Asp-103. Mg(2+) contacts are provided by Glu-231, Glu-267, His-270, Asp-295, Asp-306, Asp-308, and Asp-338.

The protein belongs to the xylose isomerase family. In terms of assembly, homotetramer. Mg(2+) is required as a cofactor.

It is found in the cytoplasm. It carries out the reaction alpha-D-xylose = alpha-D-xylulofuranose. The sequence is that of Xylose isomerase from Brucella ovis (strain ATCC 25840 / 63/290 / NCTC 10512).